Here is a 398-residue protein sequence, read N- to C-terminus: Acetate kinase (398 aa).

Asn-7 contributes to the Mg(2+) binding site. Position 14 (Lys-14) interacts with ATP. Substrate is bound at residue Arg-91. Catalysis depends on Asp-148, which acts as the Proton donor/acceptor. Residues 208–212, 283–285, and 331–335 each bind ATP; these read HIGNG, DMR, and GVGEN. Glu-384 serves as a coordination point for Mg(2+).

The protein belongs to the acetokinase family. Homodimer. It depends on Mg(2+) as a cofactor. Mn(2+) is required as a cofactor.

The protein localises to the cytoplasm. The catalysed reaction is acetate + ATP = acetyl phosphate + ADP. The protein operates within metabolic intermediate biosynthesis; acetyl-CoA biosynthesis; acetyl-CoA from acetate: step 1/2. Functionally, catalyzes the formation of acetyl phosphate from acetate and ATP. Can also catalyze the reverse reaction. This Bacteroides fragilis (strain ATCC 25285 / DSM 2151 / CCUG 4856 / JCM 11019 / LMG 10263 / NCTC 9343 / Onslow / VPI 2553 / EN-2) protein is Acetate kinase.